Reading from the N-terminus, the 181-residue chain is Adenine phosphoribosyltransferase (181 aa).

The protein belongs to the purine/pyrimidine phosphoribosyltransferase family. As to quaternary structure, homodimer.

It is found in the cytoplasm. The enzyme catalyses AMP + diphosphate = 5-phospho-alpha-D-ribose 1-diphosphate + adenine. It participates in purine metabolism; AMP biosynthesis via salvage pathway; AMP from adenine: step 1/1. Functionally, catalyzes a salvage reaction resulting in the formation of AMP, that is energically less costly than de novo synthesis. The chain is Adenine phosphoribosyltransferase from Vibrio parahaemolyticus serotype O3:K6 (strain RIMD 2210633).